The chain runs to 415 residues: uncharacterized protein (415 aa).

His88 is a binding site for Zn(2+). Asp90 is an active-site residue. Residue Asp121 participates in Zn(2+) binding. The Proton acceptor role is filled by Glu155. Positions 156, 185, and 392 each coordinate Zn(2+).

This sequence belongs to the peptidase M20A family. Zn(2+) serves as cofactor. It depends on Co(2+) as a cofactor.

This is an uncharacterized protein from Methanococcus maripaludis (strain DSM 14266 / JCM 13030 / NBRC 101832 / S2 / LL).